Reading from the N-terminus, the 530-residue chain is TNF receptor-associated factor 6 (530 aa).

The interaction with TAX1BP1 stretch occupies residues 1 to 362; sequence MSLLNCENSC…EAQQCNGIYI (362 aa). The segment at 70 to 109 adopts an RING-type; degenerate zinc-finger fold; that stretch reads CPICLMALREAVQTPCGHRFCKACITKSIRDAGHKCPVDN. K124 is covalently cross-linked (Glycyl lysine isopeptide (Lys-Gly) (interchain with G-Cter in SUMO); alternate). A Glycyl lysine isopeptide (Lys-Gly) (interchain with G-Cter in ubiquitin); alternate cross-link involves residue K124. K142 is covalently cross-linked (Glycyl lysine isopeptide (Lys-Gly) (interchain with G-Cter in SUMO)). 2 consecutive TRAF-type zinc fingers follow at residues 150 to 202 and 203 to 259; these read DHQV…EEKE and IHDQ…NHLA. A coiled-coil region spans residues 302-356; the sequence is NYEETVKQLEGRLVRQDHQIRELTAKMETQSMHVSELKRTIRSLEDKVAEMEAQQ. A Glycyl lysine isopeptide (Lys-Gly) (interchain with G-Cter in ubiquitin) cross-link involves residue K327. The MATH domain maps to 358–507; it reads NGIYIWKIGN…DDTLLVRCEV (150 aa). Positions 363–530 are interaction with TANK; it reads WKIGNFGMHL…FQPRSTDAGV (168 aa). A Glycyl lysine isopeptide (Lys-Gly) (interchain with G-Cter in SUMO) cross-link involves residue K461.

The protein belongs to the TNF receptor-associated factor family. A subfamily. Homotrimer. Homooligomer. N-terminal region is dimeric while C-terminal region is trimeric; maybe providing a mode of oligomerization. Upon IL1B treatment, forms a complex with PELI1, IRAK1, IRAK4 and MYD88; this complex recruits MAP3K7/TAK1, TAB1 and TAB2 to mediate NF-kappa-B activation. Direct binding of SMAD6 to PELI1 prevents the complex formation and hence negatively regulates IL1R-TLR signaling and eventually NF-kappa-B-mediated gene expression. Binds to TNFRSF5/CD40 and TNFRSF11A/RANK. Associates with NGFR, TNFRSF17, IRAK2, IRAK3, RIPK2, MAP3K1, MAP3K5, MAP3K14, CSK, TRAF, TRAF-interacting protein TRIP and TNF receptor associated protein TDP2. Interacts with IL17R. Interacts with SQSTM1 bridging NTRK1 and NGFR. Forms a ternary complex with SQSTM1 and PRKCZ. Interacts with PELI2 and PELI3. Binds UBE2V1. Interacts with TAX1BP1; this interaction mediates deubiquitination of TRAF6 and inhibition of NF-kappa-B activation. Interacts with ZNF675. Interacts with ARRB1 and ARRB2. Interacts with MAP3K7 and TAB1/MAP3K7IP1; during IL-1 signaling. Interacts with UBE2N. Interacts with TGFBR1, HDAC1 and RANGAP1. Interacts with AKT1, AKT2 and AKT3. Interacts (via TRAF domains) with NUMBL (via C-terminal). Interacts with RBCK1. Interacts with LIMD1 (via LIM domains). Interacts with RSAD2/viperin. Interacts (via C-terminus) with EIF2AK2/PKR (via the kinase catalytic domain). Interacts with ZFAND5. Interacts with IL1RL1. Interacts with TRAFD1. Interacts with AJUBA. Interacts with MAVS/IPS1. Interacts (via TRAF domains) with DYNC2I2 (via WD domains). Interacts with IFIT3 (via N-terminus). Interacts with TICAM2. Interacts with CARD14. Interacts with CD40 and MAP3K8; the interaction is required for ERK activation. Interacts with TICAM1 and this interaction is enhanced in the presence of WDFY1. Interacts with TANK; this interaction increases in response to DNA damage. Interacts with USP10; this interaction increases in response to DNA damage. Interacts with ZC3H12A; this interaction increases in response to DNA damage and is stimulated by TANK. Interacts with WDFY3. Interacts with TRIM13. Interacts with GPS2. Interacts (via C-terminus) with SASH1. Interacts with LRRC19. Interacts with IL17RA and TRAF3IP2. Interacts with TOMM70. Interacts with AMBRA1; interaction is required to mediate 'Lys-63'-linked ubiquitination of ULK1. Interacts with CRBN; this interaction inhibits TLR4-mediated signaling by preventing TRAF6-mediated ubiquitination of ECSIT. Post-translationally, sumoylated on Lys-124, Lys-142 and Lys-461 with SUMO1. In terms of processing, polyubiquitinated on Lys-124 by TRAF3IP2; after cell stimulation with IL17A. Polyubiquitinated; after cell stimulation with IL1B or TGFB. This ligand-induced cell stimulation leads to dimerization/oligomerization of TRAF6 molecules, followed by auto-ubiquitination which involves UBE2N and UBE2V1 and leads to TRAF6 activation. This 'Lys-63' site-specific poly-ubiquitination appears to be associated with the activation of signaling molecules. Endogenous autoubiquitination occurs only for the cytoplasmic form. Deubiquitinated by USP10 in a TANK-dependent manner, leading to the negative regulation of NF-kappa-B signaling upon DNA damage. LRRC19 induces 'Lys-63' ubiquitination. Ubiquitinated at Lys-327 by the SCF(FBXL2) complex, leading to its degradation by the proteasome.

The protein resides in the cytoplasm. Its subcellular location is the cell cortex. It is found in the nucleus. It localises to the lipid droplet. The enzyme catalyses S-ubiquitinyl-[E2 ubiquitin-conjugating enzyme]-L-cysteine + [acceptor protein]-L-lysine = [E2 ubiquitin-conjugating enzyme]-L-cysteine + N(6)-ubiquitinyl-[acceptor protein]-L-lysine.. Its pathway is protein modification; protein ubiquitination. Functionally, E3 ubiquitin ligase that, together with UBE2N and UBE2V1, mediates the synthesis of 'Lys-63'-linked-polyubiquitin chains conjugated to proteins, such as ECSIT, IKBKG, IRAK1, AKT1 and AKT2. Also mediates ubiquitination of free/unanchored polyubiquitin chain that leads to MAP3K7 activation. Leads to the activation of NF-kappa-B and JUN. Seems to also play a role in dendritic cells (DCs) maturation and/or activation. Represses c-Myb-mediated transactivation, in B-lymphocytes. Adapter protein that seems to play a role in signal transduction initiated via TNF receptor, IL-1 receptor and IL-17 receptor. Regulates osteoclast differentiation by mediating the activation of adapter protein complex 1 (AP-1) and NF-kappa-B, in response to RANK-L stimulation. Together with MAP3K8, mediates CD40 signals that activate ERK in B-cells and macrophages, and thus may play a role in the regulation of immunoglobulin production. Acts as a regulator of the JNK and NF-kappa-B signaling pathways by initiating assembly of heterotypic 'Lys-63'-/'Lys-48'-linked branched ubiquitin chains that are then recognized by TAB2: TRAF6 catalyzes initial 'Lys-63'-linked-polyubiquitin chains that are then branched via 'Lys-48'-linked polyubiquitin by HUWE1. 'Lys-63'-/'Lys-48'-linked branched ubiquitin chains protect 'Lys-63'-linkages from CYLD deubiquitination. Also participates in the TCR signaling by ubiquitinating LAT. The sequence is that of TNF receptor-associated factor 6 (Traf6) from Rattus norvegicus (Rat).